Consider the following 254-residue polypeptide: Type III pantothenate kinase (254 aa).

6 to 13 (DVGNTNTV) contributes to the ATP binding site. Residues Tyr100 and 107–110 (GADR) contribute to the substrate site. Asp109 functions as the Proton acceptor in the catalytic mechanism. Asp129 serves as a coordination point for K(+). Thr132 lines the ATP pocket. Residue Thr184 coordinates substrate.

It belongs to the type III pantothenate kinase family. As to quaternary structure, homodimer. It depends on NH4(+) as a cofactor. K(+) serves as cofactor.

It is found in the cytoplasm. The catalysed reaction is (R)-pantothenate + ATP = (R)-4'-phosphopantothenate + ADP + H(+). Its pathway is cofactor biosynthesis; coenzyme A biosynthesis; CoA from (R)-pantothenate: step 1/5. Catalyzes the phosphorylation of pantothenate (Pan), the first step in CoA biosynthesis. The polypeptide is Type III pantothenate kinase (Syntrophus aciditrophicus (strain SB)).